Consider the following 684-residue polypeptide: Galactocerebrosidase (684 aa).

The first 42 residues, 1–42 (MANSQPKASQQRQAKVMTAAAGSASRVAVPLLLCALLVPGGA), serve as a signal peptide directing secretion. Threonine 109, tryptophan 151, and asparagine 197 together coordinate substrate. The Proton donor/acceptor role is filled by glutamate 198. The active-site Nucleophile is glutamate 274. Cysteine 287 and cysteine 394 are disulfide-bonded. N-linked (GlcNAc...) asparagine glycans are attached at residues asparagine 300 and asparagine 379. Arginine 396 lines the substrate pocket. Residues asparagine 403, asparagine 558, asparagine 601, and asparagine 645 are each glycosylated (N-linked (GlcNAc...) asparagine).

Belongs to the glycosyl hydrolase 59 family. As to expression, detected in brain and kidney.

The protein localises to the lysosome. It carries out the reaction a beta-D-galactosyl-(1&lt;-&gt;1')-N-acylsphing-4-enine + H2O = an N-acylsphing-4-enine + D-galactose. The catalysed reaction is a D-galactosylceramide + H2O = an N-acyl-sphingoid base + D-galactose. It catalyses the reaction beta-D-galactosyl-(1&lt;-&gt;1)-sphing-4-enine + H2O = sphing-4-enine + D-galactose. In terms of biological role, hydrolyzes the galactose ester bonds of glycolipids such as galactosylceramide and galactosylsphingosine. Enzyme with very low activity responsible for the lysosomal catabolism of galactosylceramide, a major lipid in myelin, kidney and epithelial cells of small intestine and colon. This Mus musculus (Mouse) protein is Galactocerebrosidase.